The sequence spans 392 residues: Queuine tRNA-ribosyltransferase (392 aa).

D93 serves as the catalytic Proton acceptor. Residues 93 to 97 (DSGGY), D147, Q189, and G216 contribute to the substrate site. Positions 247–253 (GVGAPED) are RNA binding. The active-site Nucleophile is D266. Residues 271-275 (TRVAR) are RNA binding; important for wobble base 34 recognition. 4 residues coordinate Zn(2+): C304, C306, C309, and H335.

Belongs to the queuine tRNA-ribosyltransferase family. In terms of assembly, homodimer. Within each dimer, one monomer is responsible for RNA recognition and catalysis, while the other monomer binds to the replacement base PreQ1. Zn(2+) serves as cofactor.

It catalyses the reaction 7-aminomethyl-7-carbaguanine + guanosine(34) in tRNA = 7-aminomethyl-7-carbaguanosine(34) in tRNA + guanine. It functions in the pathway tRNA modification; tRNA-queuosine biosynthesis. In terms of biological role, catalyzes the base-exchange of a guanine (G) residue with the queuine precursor 7-aminomethyl-7-deazaguanine (PreQ1) at position 34 (anticodon wobble position) in tRNAs with GU(N) anticodons (tRNA-Asp, -Asn, -His and -Tyr). Catalysis occurs through a double-displacement mechanism. The nucleophile active site attacks the C1' of nucleotide 34 to detach the guanine base from the RNA, forming a covalent enzyme-RNA intermediate. The proton acceptor active site deprotonates the incoming PreQ1, allowing a nucleophilic attack on the C1' of the ribose to form the product. After dissociation, two additional enzymatic reactions on the tRNA convert PreQ1 to queuine (Q), resulting in the hypermodified nucleoside queuosine (7-(((4,5-cis-dihydroxy-2-cyclopenten-1-yl)amino)methyl)-7-deazaguanosine). The sequence is that of Queuine tRNA-ribosyltransferase from Dehalococcoides mccartyi (strain CBDB1).